The chain runs to 1331 residues: Mitogen-activated protein kinase kinase kinase 15 (1331 aa).

Gly residues predominate over residues 1–13 (MEGGGGSGGGGGP). Residues 1 to 61 (MEGGGGSGGG…GEAEGGRGPR (61 aa)) are disordered. The 257-residue stretch at 656–912 (NGERVVLGKG…AADLLQEGFL (257 aa)) folds into the Protein kinase domain. Residues 662–670 (LGKGSYGIV) and Lys-685 contribute to the ATP site. Asp-777 (proton acceptor) is an active-site residue. Disordered stretches follow at residues 934-964 (GTGT…SDAQ) and 983-1005 (LSVP…EERD). Low complexity predominate over residues 940 to 962 (LPSSGELVGSSSSEHGSISPDSD). Residues 992–1005 (LDDRSTALPPEERD) show a composition bias toward basic and acidic residues. The stretch at 1216–1236 (LVQKEREYQNLLRLILDQKTQ) forms a coiled coil.

Belongs to the protein kinase superfamily. STE Ser/Thr protein kinase family. MAP kinase kinase kinase subfamily. The cofactor is Mg(2+).

It carries out the reaction L-seryl-[protein] + ATP = O-phospho-L-seryl-[protein] + ADP + H(+). The catalysed reaction is L-threonyl-[protein] + ATP = O-phospho-L-threonyl-[protein] + ADP + H(+). Contains an N-terminal autoinhibitory domain. Activated by phosphorylation at Thr-816, inhibited by phosphorylation at Ser-928. In terms of biological role, serine/threonine kinase which acts as a component of the MAP kinase signal transduction pathway. Once activated, acts as an upstream activator of the p38 MAPK signal transduction cascade through the phosphorylation and activation of several MAP kinase kinases. May function in a signal transduction pathway that is activated by various cell stresses and leads to apoptosis. Involved in phosphorylation of WNK4 in response to osmotic stress or hypotonic low-chloride stimulation via the p38 MAPK signal transduction cascade. The polypeptide is Mitogen-activated protein kinase kinase kinase 15 (Mus musculus (Mouse)).